Reading from the N-terminus, the 82-residue chain is Large ribosomal subunit protein bL31B (82 aa).

The protein belongs to the bacterial ribosomal protein bL31 family. Type B subfamily. As to quaternary structure, part of the 50S ribosomal subunit.

The protein is Large ribosomal subunit protein bL31B of Dichelobacter nodosus (strain VCS1703A).